A 146-amino-acid polypeptide reads, in one-letter code: Phospholipase A2, membrane associated (146 aa).

Positions 1–21 (MKVLLLLAVVIMAFGSIQVQG) are cleaved as a signal peptide. Cystine bridges form between C47-C139, C49-C65, C64-C119, C70-C146, C71-C112, C80-C105, and C98-C110. Residues H48, G50, and G52 each contribute to the Ca(2+) site. Residue H68 is part of the active site. D69 provides a ligand contact to Ca(2+). Residue D113 is part of the active site.

Belongs to the phospholipase A2 family. It depends on Ca(2+) as a cofactor.

Its subcellular location is the secreted. The protein resides in the cell membrane. It is found in the mitochondrion outer membrane. The enzyme catalyses a 1,2-diacyl-sn-glycero-3-phosphoethanolamine + H2O = a 1-acyl-sn-glycero-3-phosphoethanolamine + a fatty acid + H(+). It carries out the reaction 1-hexadecanoyl-2-(9Z-octadecenoyl)-sn-glycero-3-phosphoethanolamine + H2O = 1-hexadecanoyl-sn-glycero-3-phosphoethanolamine + (9Z)-octadecenoate + H(+). The catalysed reaction is 1-hexadecanoyl-2-(9Z,12Z-octadecadienoyl)-sn-glycero-3-phosphoethanolamine + H2O = 1-hexadecanoyl-sn-glycero-3-phosphoethanolamine + (9Z,12Z)-octadecadienoate + H(+). It catalyses the reaction 1-hexadecanoyl-2-(5Z,8Z,11Z,14Z-eicosatetraenoyl)-sn-glycero-3-phosphoethanolamine + H2O = 1-hexadecanoyl-sn-glycero-3-phosphoethanolamine + (5Z,8Z,11Z,14Z)-eicosatetraenoate + H(+). The enzyme catalyses N-hexadecanoyl-1,2-di-(9Z-octadecenoyl)-sn-glycero-3-phosphoethanolamine + H2O = N-hexadecanoyl-1-(9Z-octadecenoyl)-sn-glycero-3-phosphoethanolamine + (9Z)-octadecenoate + H(+). It carries out the reaction 1,2-dihexadecanoyl-sn-glycero-3-phospho-(1'-sn-glycerol) + H2O = 1-hexadecanoyl-sn-glycero-3-phospho-(1'-sn-glycerol) + hexadecanoate + H(+). The catalysed reaction is 1-hexadecanoyl-2-(9Z-octadecenoyl)-sn-glycero-3-phosphoglycerol + H2O = 1-hexadecanoyl-sn-glycero-3-phosphoglycerol + (9Z)-octadecenoate + H(+). It catalyses the reaction 1-hexadecanoyl-2-(9Z-octadecenoyl)-sn-glycero-3-phospho-(1'-sn-glycerol) + H2O = 1-hexadecanoyl-sn-glycero-3-phospho-(1'-sn-glycerol) + (9Z)-octadecenoate + H(+). The enzyme catalyses a 1,2-diacyl-sn-glycero-3-phosphocholine + H2O = a 1-acyl-sn-glycero-3-phosphocholine + a fatty acid + H(+). It carries out the reaction 1,2-dihexadecanoyl-sn-glycero-3-phosphocholine + H2O = 1-hexadecanoyl-sn-glycero-3-phosphocholine + hexadecanoate + H(+). The catalysed reaction is 1-hexadecanoyl-2-(9Z-octadecenoyl)-sn-glycero-3-phosphocholine + H2O = 1-hexadecanoyl-sn-glycero-3-phosphocholine + (9Z)-octadecenoate + H(+). It catalyses the reaction 1-hexadecanoyl-2-(9Z,12Z-octadecadienoyl)-sn-glycero-3-phosphocholine + H2O = (9Z,12Z)-octadecadienoate + 1-hexadecanoyl-sn-glycero-3-phosphocholine + H(+). The enzyme catalyses 1-hexadecanoyl-2-(4Z,7Z,10Z,13Z,16Z,19Z-docosahexaenoyl)-sn-glycero-3-phosphocholine + H2O = (4Z,7Z,10Z,13Z,16Z,19Z)-docosahexaenoate + 1-hexadecanoyl-sn-glycero-3-phosphocholine + H(+). Functionally, secretory calcium-dependent phospholipase A2 that primarily targets extracellular phospholipids with implications in host antimicrobial defense, inflammatory response and tissue regeneration. Hydrolyzes the ester bond of the fatty acyl group attached at sn-2 position of phospholipids (phospholipase A2 activity) with preference for phosphatidylethanolamines and phosphatidylglycerols over phosphatidylcholines. Contributes to lipid remodeling of cellular membranes and generation of lipid mediators involved in pathogen clearance. Displays bactericidal activity against Gram-positive bacteria by directly hydrolyzing phospholipids of the bacterial membrane. Upon sterile inflammation, targets membrane phospholipids of extracellular mitochondria released from activated platelets, generating free unsaturated fatty acids such as arachidonate that is used by neighboring leukocytes to synthesize inflammatory eicosanoids such as leukotrienes. Simultaneously, by compromising mitochondrial membrane integrity, promotes the release in circulation of potent damage-associated molecular pattern molecules that activate the innate immune response. Plays a stem cell regulator role in the intestinal crypt. Within intracellular compartment mediates Paneth cell differentiation and its stem cell supporting functions by inhibiting Wnt signaling pathway in intestinal stem cell (ICS). Secreted in the intestinal lumen upon inflammation, acts in an autocrine way and promotes prostaglandin E2 synthesis that stimulates Wnt signaling pathway in ICS cells and tissue regeneration. May play a role in the biosynthesis of N-acyl ethanolamines that regulate energy metabolism and inflammation. Hydrolyzes N-acyl phosphatidylethanolamines to N-acyl lysophosphatidylethanolamines, which are further cleaved by a lysophospholipase D to release N-acyl ethanolamines. Independent of its catalytic activity, acts as a ligand for integrins. Binds to and activates integrins ITGAV:ITGB3, ITGA4:ITGB1 and ITGA5:ITGB1. Binds to a site (site 2) which is distinct from the classical ligand-binding site (site 1) and induces integrin conformational changes and enhanced ligand binding to site 1. Induces cell proliferation in an integrin-dependent manner. This chain is Phospholipase A2, membrane associated (Pla2g2a), found in Rattus norvegicus (Rat).